We begin with the raw amino-acid sequence, 584 residues long: Pescadillo homolog (584 aa).

The segment at 1 to 54 is required for 28S ribosomal RNA processing; that stretch reads MGGLEKKKYERGSATNYITRNKARKKLQLSLPDFRRLCILKGIYPHEPKHKKKV. The segment at 1 to 257 is sufficient for nucleolar localization; that stretch reads MGGLEKKKYE…PKLEGQAQAE (257 aa). Position 98 is an N6-acetyllysine (K98). The segment at 312–414 is sufficient for interaction with MAP1B; that stretch reads RKKELEAQEK…LLLPVAEYFP (103 aa). Residues 321–414 enclose the BRCT domain; sequence KHKKLFEGLK…LLLPVAEYFP (94 aa). The disordered stretch occupies residues 449 to 510; it reads DPGHLEEEEE…EEKKPQVMAG (62 aa). Residues 454–489 show a composition bias toward acidic residues; it reads EEEEEEDEDDDNEGDVAAENEEEDVEVESEEEEEEE. Residues 496 to 505 show a composition bias toward basic and acidic residues; it reads EQHRLEEKKP. Residue K513 forms a Glycyl lysine isopeptide (Lys-Gly) (interchain with G-Cter in SUMO1); alternate linkage. K513 participates in a covalent cross-link: Glycyl lysine isopeptide (Lys-Gly) (interchain with G-Cter in SUMO2); alternate. A required for 28S ribosomal RNA processing region spans residues 535 to 584; sequence MMKKREKYLYQKIMFGKRRKIREANKLAEKRKAHDDAVRSEKKAKRTRPV. Residues 560–575 are compositionally biased toward basic and acidic residues; it reads KLAEKRKAHDDAVRSE. The tract at residues 560 to 584 is disordered; sequence KLAEKRKAHDDAVRSEKKAKRTRPV.

It belongs to the pescadillo family. In terms of assembly, component of the PeBoW complex, composed of BOP1, PES1 and WDR12. The complex is held together by BOP1, which interacts with PES1 via its N-terminal domain and with WDR12 via a high-affinity interaction between the seven-bladed beta-propeller domains of the 2 proteins. The PeBoW complex associates with the 66S pre-ribosome. The PeBoW complex also associates with DDX27, PES1 interacts directly with DDX27. Interacts with IRS1 and UBTF. May interact with MAP1B. Sumoylated. As to expression, ubiquitous. Highest levels appear to be found in tissues that contain a population of proliferating cells, such as ovary and testis. Also appears to be highly expressed in kidney and liver. In the brain expression is restricted to neural progenitor cells and postmitotic neurons. Highly expressed in malignant astrocytes.

Its subcellular location is the nucleus. It is found in the nucleolus. The protein resides in the nucleoplasm. It localises to the chromosome. Functionally, component of the PeBoW complex, which is required for maturation of 28S and 5.8S ribosomal RNAs and formation of the 60S ribosome. The chain is Pescadillo homolog (Pes1) from Mus musculus (Mouse).